Reading from the N-terminus, the 365-residue chain is Holliday junction branch migration complex subunit RuvB (365 aa).

The tract at residues 1-191 (MSPELGGGYD…FGFTAHMDFY (191 aa)) is large ATPase domain (RuvB-L). ATP contacts are provided by residues L30, R31, G72, K75, T76, S77, 138-140 (EDF), R181, Y191, and R228. A Mg(2+)-binding site is contributed by T76. Residues 192 to 262 (EPAELKQILM…IAHAALAVYD (71 aa)) form a small ATPAse domain (RuvB-S) region. Positions 265–365 (QLGLDRLDRS…QASLFDPEDP (101 aa)) are head domain (RuvB-H). The DNA site is built by R320 and R325.

It belongs to the RuvB family. Homohexamer. Forms an RuvA(8)-RuvB(12)-Holliday junction (HJ) complex. HJ DNA is sandwiched between 2 RuvA tetramers; dsDNA enters through RuvA and exits via RuvB. An RuvB hexamer assembles on each DNA strand where it exits the tetramer. Each RuvB hexamer is contacted by two RuvA subunits (via domain III) on 2 adjacent RuvB subunits; this complex drives branch migration. In the full resolvosome a probable DNA-RuvA(4)-RuvB(12)-RuvC(2) complex forms which resolves the HJ.

The protein resides in the cytoplasm. It catalyses the reaction ATP + H2O = ADP + phosphate + H(+). Functionally, the RuvA-RuvB-RuvC complex processes Holliday junction (HJ) DNA during genetic recombination and DNA repair, while the RuvA-RuvB complex plays an important role in the rescue of blocked DNA replication forks via replication fork reversal (RFR). RuvA specifically binds to HJ cruciform DNA, conferring on it an open structure. The RuvB hexamer acts as an ATP-dependent pump, pulling dsDNA into and through the RuvAB complex. RuvB forms 2 homohexamers on either side of HJ DNA bound by 1 or 2 RuvA tetramers; 4 subunits per hexamer contact DNA at a time. Coordinated motions by a converter formed by DNA-disengaged RuvB subunits stimulates ATP hydrolysis and nucleotide exchange. Immobilization of the converter enables RuvB to convert the ATP-contained energy into a lever motion, pulling 2 nucleotides of DNA out of the RuvA tetramer per ATP hydrolyzed, thus driving DNA branch migration. The RuvB motors rotate together with the DNA substrate, which together with the progressing nucleotide cycle form the mechanistic basis for DNA recombination by continuous HJ branch migration. Branch migration allows RuvC to scan DNA until it finds its consensus sequence, where it cleaves and resolves cruciform DNA. The chain is Holliday junction branch migration complex subunit RuvB from Rhodococcus opacus (strain B4).